Consider the following 389-residue polypeptide: Endo-chitosanase C (389 aa).

The first 22 residues, 1–22 (MPIKSFASRLALSLAICGTAMG), serve as a signal peptide directing secretion. The stretch at 280-313 (CSWPGHCAGFKNKGATCSSNDDCSDDLACQNGKC) is one R3-1 repeat. An R3-2 repeat occupies 320 to 350 (ETCSWEGHCKGATCSSNDDCSDELACISGIC). The R3-3 repeat unit spans residues 357 to 387 (ETCEWEGHCEGASCSSHDDCDGNLACKNGKC).

It belongs to the glycosyl hydrolase 75 family.

Its subcellular location is the secreted. The enzyme catalyses Endohydrolysis of beta-(1-&gt;4)-linkages between D-glucosamine residues in a partly acetylated chitosan.. In terms of biological role, chitosanase catalyzing the endo-type cleavage of chitosan, the deacylated form of chitin. Chitosanase may be crucial in the degradation of the deacetylated portion of chitin in the fungal cell wall. Chitoolisaccharides produced by the hydrolysis of partially N-acetylated chitosan are known to have many biological activities, including antibacterial activity, immune-enhancing effects, and elicitor activity. This chain is Endo-chitosanase C (csnC), found in Aspergillus oryzae (strain ATCC 42149 / RIB 40) (Yellow koji mold).